The primary structure comprises 86 residues: Small ribosomal subunit protein bS20 (86 aa).

Residues 1-25 (MANIKSAIKRAKTSEKRRVANSQEK) form a disordered region.

The protein belongs to the bacterial ribosomal protein bS20 family.

Binds directly to 16S ribosomal RNA. The chain is Small ribosomal subunit protein bS20 from Exiguobacterium sp. (strain ATCC BAA-1283 / AT1b).